The primary structure comprises 177 residues: MDLPGPIHDVLLVFLGSGLILGGLGVVLLTNPIYSAFSLGLVLVCISLFYILSNSYFVAAAQLLIYVGAVNVLIIFAVMFMNGSDYSNDFYLWTVGDGVTSLVCTSILFSLITTILDTSWYGIIWNTGSNQIVEQDLTSNVQQIGIHLSTDFYLPFELVSIILLVALIGAITMARQY.

5 helical membrane passes run 10–30, 32–52, 61–81, 90–112, and 152–172; these read VLLVFLGSGLILGGLGVVLLT, PIYSAFSLGLVLVCISLFYIL, AQLLIYVGAVNVLIIFAVMFM, FYLWTVGDGVTSLVCTSILFSLI, and FYLPFELVSIILLVALIGAIT.

This sequence belongs to the complex I subunit 6 family. In terms of assembly, NDH is composed of at least 16 different subunits, 5 of which are encoded in the nucleus.

The protein localises to the plastid. It localises to the chloroplast thylakoid membrane. The catalysed reaction is a plastoquinone + NADH + (n+1) H(+)(in) = a plastoquinol + NAD(+) + n H(+)(out). The enzyme catalyses a plastoquinone + NADPH + (n+1) H(+)(in) = a plastoquinol + NADP(+) + n H(+)(out). Its function is as follows. NDH shuttles electrons from NAD(P)H:plastoquinone, via FMN and iron-sulfur (Fe-S) centers, to quinones in the photosynthetic chain and possibly in a chloroplast respiratory chain. The immediate electron acceptor for the enzyme in this species is believed to be plastoquinone. Couples the redox reaction to proton translocation, and thus conserves the redox energy in a proton gradient. This Acorus calamus var. americanus (American sweet flag) protein is NAD(P)H-quinone oxidoreductase subunit 6, chloroplastic (ndhG).